The sequence spans 342 residues: Hypoxia responsive morphology factor C (342 aa).

Residues 46-68 carry the Bipartite nuclear localization signal motif; that stretch reads RMKIPRRKSEYSSHDRLKRARKI. The tract at residues 151-181 is RNA recognition motif (RRM)-like domain; the sequence is ADDAWAYNAADMDTAVKFFSEAIYKAIESSP.

The protein belongs to the hrmA family.

It localises to the nucleus. In terms of biological role, probably modulates the generation of the hypoxia-typic morphotype (called H-MORPH) with altered biofilm architecture that leads to increased host inflammation, rapid disease progression, and mortality in a murine model of invasive aspergillosis. In Aspergillus fumigatus (strain CBS 144.89 / FGSC A1163 / CEA10) (Neosartorya fumigata), this protein is Hypoxia responsive morphology factor C.